We begin with the raw amino-acid sequence, 97 residues long: MAPLPPCGPPRSPPPRLLLLLLLLSATLLGAPARAEPAAGSAVPAQSRPCVDCHAFEFMQRALQDLRKTAYSLDARTESLLLQAERRALCACWPAGH.

An N-terminal signal peptide occupies residues 1–35; sequence MAPLPPCGPPRSPPPRLLLLLLLLSATLLGAPARA.

It belongs to the NICOL family. As to quaternary structure, interacts with NELL2; triggers epididymal differentiation. Interacts with cell surface receptor TFRC; the interaction mediates uptake of NICOL1 into fibroblasts.

The protein localises to the secreted. It is found in the cytoplasm. The protein resides in the perinuclear region. Its function is as follows. mRNA-binding protein which interacts with a range of target mRNAs including SERPINE1, ACTA2, CCN2 and COL4A1 and may promote extracellular matrix production. Binds to the 3'-UTR of SERPINE1 mRNA and stabilizes the mRNA, possibly by competing for binding with SERBP1 and preventing SERBP1-mediated mRNA degradation. Also binds to the 3'-UTR of ACTA2. Testis-derived lumicrine factor that triggers epididymal differentiation and sperm maturation. This is NELL2-interacting cell ontogeny regulator 1 from Bos taurus (Bovine).